The chain runs to 267 residues: Small ribosomal subunit protein eS4 (267 aa).

One can recognise an S4 RNA-binding domain in the interval L42 to D104.

Belongs to the eukaryotic ribosomal protein eS4 family.

The protein resides in the cytoplasm. This chain is Small ribosomal subunit protein eS4 (rps4), found in Dictyostelium discoideum (Social amoeba).